The chain runs to 265 residues: Small ribosomal subunit protein uS3 (265 aa).

A KH type-2 domain is found at 39–107 (VRDFLKKKLK…PVHVNIEEIR (69 aa)). The disordered stretch occupies residues 211–265 (NDAPVVEEPQDDRRRRPGRPEGRRREGEGRPGGNRRGGAGAGRRAAPGADAKSGE). The segment covering 221–239 (DDRRRRPGRPEGRRREGEG) has biased composition (basic and acidic residues). A compositionally biased stretch (gly residues) spans 240-251 (RPGGNRRGGAGA).

Belongs to the universal ribosomal protein uS3 family. Part of the 30S ribosomal subunit. Forms a tight complex with proteins S10 and S14.

Its function is as follows. Binds the lower part of the 30S subunit head. Binds mRNA in the 70S ribosome, positioning it for translation. The polypeptide is Small ribosomal subunit protein uS3 (Cupriavidus necator (strain ATCC 17699 / DSM 428 / KCTC 22496 / NCIMB 10442 / H16 / Stanier 337) (Ralstonia eutropha)).